Reading from the N-terminus, the 223-residue chain is MLFLDKGRIEALRRRLIEWYRVYGDKDLPWRNTADPWAILVAAFLLRKTTARQVVRVYEEFLRRYPNPKALASAREDEVRELIRPLGIEHQRAKHLIELAKHIEARYGGRIPCSKEKLKELPGVGDYIASEVLLAACGSPEPLLDRNMIRILERVLGVKSAKKRPHTDPKMWSTARRIVPKDPDMAKEFNYGMLDLARKICTARKPLCTECPLNDICIYYNND.

Residues C201, C208, C211, and C217 each contribute to the [4Fe-4S] cluster site.

This sequence belongs to the Nth/MutY family. Requires [4Fe-4S] cluster as cofactor.

The catalysed reaction is Hydrolyzes mismatched double-stranded DNA and polynucleotides, releasing free thymine.. With respect to regulation, thymine cleavage is completely inhibited by Ni(2+), Co(2+), Zn(2+), Cu(2+) and Mn(2+). Activity is not affected by Mg(2+) and Ca(2+). Functionally, DNA glycosylase that excises thymine from T/G mismatches. Also has a weak DNA glycosylase activity on uracil paired with various bases. The sequence is that of Thymine-DNA glycosylase from Aeropyrum pernix (strain ATCC 700893 / DSM 11879 / JCM 9820 / NBRC 100138 / K1).